Here is a 339-residue protein sequence, read N- to C-terminus: Phenylalanine--tRNA ligase alpha subunit (339 aa).

Glu253 is a Mg(2+) binding site.

Belongs to the class-II aminoacyl-tRNA synthetase family. Phe-tRNA synthetase alpha subunit type 1 subfamily. In terms of assembly, tetramer of two alpha and two beta subunits. It depends on Mg(2+) as a cofactor.

Its subcellular location is the cytoplasm. The enzyme catalyses tRNA(Phe) + L-phenylalanine + ATP = L-phenylalanyl-tRNA(Phe) + AMP + diphosphate + H(+). The sequence is that of Phenylalanine--tRNA ligase alpha subunit from Ruthia magnifica subsp. Calyptogena magnifica.